The following is a 337-amino-acid chain: Adenylosuccinate synthetase (337 aa).

GTP contacts are provided by residues 12–18 (GDEGKGK) and 42–44 (GHT). Asp13 serves as the catalytic Proton acceptor. Positions 13 and 42 each coordinate Mg(2+). IMP is bound by residues 13–16 (DEGK), 40–43 (NAGH), Thr124, Arg138, Gln176, Thr191, and Arg253. The Proton donor role is filled by His43. 249–255 (TVTGRRR) serves as a coordination point for substrate. GTP contacts are provided by residues Arg255, 281–283 (GVD), and 321–323 (STG).

It belongs to the adenylosuccinate synthetase family. In terms of assembly, homodimer. The cofactor is Mg(2+).

The protein localises to the cytoplasm. It catalyses the reaction IMP + L-aspartate + GTP = N(6)-(1,2-dicarboxyethyl)-AMP + GDP + phosphate + 2 H(+). It functions in the pathway purine metabolism; AMP biosynthesis via de novo pathway; AMP from IMP: step 1/2. In terms of biological role, plays an important role in the de novo pathway of purine nucleotide biosynthesis. Catalyzes the first committed step in the biosynthesis of AMP from IMP. The sequence is that of Adenylosuccinate synthetase from Archaeoglobus fulgidus (strain ATCC 49558 / DSM 4304 / JCM 9628 / NBRC 100126 / VC-16).